The following is a 273-amino-acid chain: MSQLSTIIEQAFEDRANFTAADCPSEIRQAVEEAIAGLDNGTLRVAEKINGEWVVHQWLKKAVLLSFKLNDNKPIESCDLRFYDKVETKFSGWTEEQFKAAGVRVVPPAVARRGSFQAKNVVLMPSYVNIGAYVDEGTMVDTWATVGSCAQIGKNVHLSGGVGIGGVLEPLQANPTIIEDNCFIGARSEIVEGVIVEEGSVISMGVYIGQSTRIYDRETGEIHYGRVPAGSVVVPGNLPSADGKYSLYAAIIVKKVDAQTRAKTSLNDLLRAD.

This sequence belongs to the transferase hexapeptide repeat family.

Its subcellular location is the cytoplasm. It carries out the reaction (S)-2,3,4,5-tetrahydrodipicolinate + succinyl-CoA + H2O = (S)-2-succinylamino-6-oxoheptanedioate + CoA. The protein operates within amino-acid biosynthesis; L-lysine biosynthesis via DAP pathway; LL-2,6-diaminopimelate from (S)-tetrahydrodipicolinate (succinylase route): step 1/3. This chain is 2,3,4,5-tetrahydropyridine-2,6-dicarboxylate N-succinyltransferase, found in Acinetobacter baumannii (strain AB307-0294).